A 504-amino-acid polypeptide reads, in one-letter code: MPTISVKKREIEKLLGKSYDSETFSDILFNYGLEIDECIEESDDITYKIEIPANRYDLLCAEGLNYALQSYLFGKVFEDINLQSSEYTIFKQHFGNRSCVAAAIIKNYKFDKYSYDSFISYQEKLCGNLGRNRSLVSMGTHDLDTISWPVTYKSIKKTELKFAPLNCTKEINDLEMHFKDDKNIGKYLQYVDNDNYIVFMDAKGHILSVPPVINSNRTKISVNTTNILVEVTGTNTYKVNTCLKMILSAFRTDNMCQVNIISDKQEILEIKDKSYLLSIDEVYKELNINISVIDLSDLLIKMMYKTNIIDDKHLNVTVPSVRQDVLHKADLIEDIAICYGFNNINMVMPDINTIGSENRLNKFSDKLRLEMCMLGFTEVYTMVLVSKSDNIFGDNSAVVSNYKSLECEAVRSSLYPGLMKAVSSNLHCKIPIKIFEVGDVVFLDSESDVGARNRRYLSCLYVGNKSHLEDVQGPMTVILEKCGIKDYKFERMDDEKKYLKNQSA.

A B5 domain is found at 270 to 346; sequence IKDKSYLLSI…ICYGFNNINM (77 aa). Mg(2+) contacts are provided by D324, D330, E333, and D334.

It belongs to the phenylalanyl-tRNA synthetase beta subunit family. Type 2 subfamily. In terms of assembly, tetramer of two alpha and two beta subunits. Mg(2+) serves as cofactor.

The protein resides in the cytoplasm. The enzyme catalyses tRNA(Phe) + L-phenylalanine + ATP = L-phenylalanyl-tRNA(Phe) + AMP + diphosphate + H(+). This is Probable phenylalanine--tRNA ligase beta subunit from Vairimorpha ceranae (strain BRL01) (Microsporidian parasite).